The primary structure comprises 308 residues: UPF0282 protein STK_23220 (308 aa).

This sequence belongs to the UPF0282 family.

This chain is UPF0282 protein STK_23220, found in Sulfurisphaera tokodaii (strain DSM 16993 / JCM 10545 / NBRC 100140 / 7) (Sulfolobus tokodaii).